The sequence spans 417 residues: 4-hydroxy-3-methylbut-2-en-1-yl diphosphate synthase (flavodoxin) (417 aa).

Residues C304, C307, C350, and E357 each coordinate [4Fe-4S] cluster.

The protein belongs to the IspG family. Requires [4Fe-4S] cluster as cofactor.

The catalysed reaction is (2E)-4-hydroxy-3-methylbut-2-enyl diphosphate + oxidized [flavodoxin] + H2O + 2 H(+) = 2-C-methyl-D-erythritol 2,4-cyclic diphosphate + reduced [flavodoxin]. The protein operates within isoprenoid biosynthesis; isopentenyl diphosphate biosynthesis via DXP pathway; isopentenyl diphosphate from 1-deoxy-D-xylulose 5-phosphate: step 5/6. Its function is as follows. Converts 2C-methyl-D-erythritol 2,4-cyclodiphosphate (ME-2,4cPP) into 1-hydroxy-2-methyl-2-(E)-butenyl 4-diphosphate. This is 4-hydroxy-3-methylbut-2-en-1-yl diphosphate synthase (flavodoxin) from Rhizobium meliloti (strain 1021) (Ensifer meliloti).